The sequence spans 325 residues: Eukaryotic translation initiation factor 3 subunit I (325 aa).

WD repeat units follow at residues 8–47 (GHER…RLGT), 50–89 (GHTG…QLAL), 144–183 (CSDS…QLSN), 186–225 (EHTK…HLKT), and 283–324 (GHFG…FEFE).

The protein belongs to the eIF-3 subunit I family. As to quaternary structure, component of the eukaryotic translation initiation factor 3 (eIF-3) complex, which is composed of 13 subunits: EIF3A, EIF3B, EIF3C, EIF3D, EIF3E, EIF3F, EIF3G, EIF3H, EIF3I, EIF3J, EIF3K, EIF3L and EIF3M.

The protein localises to the cytoplasm. Functionally, component of the eukaryotic translation initiation factor 3 (eIF-3) complex, which is involved in protein synthesis of a specialized repertoire of mRNAs and, together with other initiation factors, stimulates binding of mRNA and methionyl-tRNAi to the 40S ribosome. The eIF-3 complex specifically targets and initiates translation of a subset of mRNAs involved in cell proliferation. This is Eukaryotic translation initiation factor 3 subunit I from Taeniopygia guttata (Zebra finch).